The primary structure comprises 235 residues: Secretory carrier-associated membrane protein 5 (235 aa).

The Cytoplasmic segment spans residues 1 to 39 (MAEKVNNFPPLPKFIPLKPCFYQDFEADIPPQHLSLTKR). Residues 40 to 60 (LYYLWMLNSVTLAVNLVGCLA) traverse the membrane as a helical segment. Over 61–67 (WLIGGGG) the chain is Extracellular. Residues 68-88 (ATNFGLAFLWLILFTPCSYVC) form a helical membrane-spanning segment. Residues 89–102 (WFRPIYKAFKTDSS) lie on the Cytoplasmic side of the membrane. Residues 103 to 125 (FSFMAFFFTFMAQLVISIIQAVG) form a helical membrane-spanning segment. Residues 126–148 (IPGWGVCGWIATISFFGTNIGSA) are Extracellular-facing. The chain crosses the membrane as a helical span at residues 149–169 (VVMLIPTVMFTVVAVFSFIAL). Residues 170-235 (SMVHKFYRGS…TPNYTYSNEM (66 aa)) are Cytoplasmic-facing.

It belongs to the SCAMP family. SCAMP5 subfamily. Interacts (via C-terminal part) with SYT1 and SYT2; interaction with synaptotagmins making a link with the SNARE molecules. Interacts with SLC9A7.

The protein resides in the cell membrane. It is found in the golgi apparatus membrane. The protein localises to the golgi apparatus. It localises to the trans-Golgi network membrane. Its subcellular location is the recycling endosome membrane. The protein resides in the cytoplasmic vesicle. It is found in the secretory vesicle. The protein localises to the synaptic vesicle membrane. Its function is as follows. Required for the calcium-dependent exocytosis of signal sequence-containing cytokines such as CCL5. Probably acts in cooperation with the SNARE machinery. This is Secretory carrier-associated membrane protein 5 (Scamp5) from Rattus norvegicus (Rat).